Consider the following 357-residue polypeptide: MIEQQKRKGPELPLVPVKRQRHELLLGAGSGPGAGQQQATPGALLQAGPPRCSSLQAPIMLLSGHEGEVYCCKFHPNGSTLASAGFDRLILLWNVYGDCDNYATLKGHSGAVMELHYNTDGSMLFSASTDKTVAVWDSETGERVKRLKGHTSFVNSCYPARRGPQLVCTGSDDGTVKLWDIRKKAAIQTFQNTYQVLAVTFNDTSDQIISGGIDNDIKVWDLRQNKLTYTMRGHADSVTGLSLSSEGSYLLSNAMDNTVRVWDVRPFAPKERCVKIFQGNVHNFEKNLLRCSWSPDGSKIAAGSADRFVYVWDTTSRRILYKLPGHAGSINEVAFHPDEPIIISASSDKRLYMGEIQ.

Lysine 18 is covalently cross-linked (Glycyl lysine isopeptide (Lys-Gly) (interchain with G-Cter in SUMO2)). Residue arginine 21 is modified to Asymmetric dimethylarginine. WD repeat units lie at residues 64 to 103 (GHEG…DNYA), 107 to 146 (GHSG…RVKR), 149 to 189 (GHTS…AIQT), 191 to 230 (QNTY…LTYT), 233 to 272 (GHAD…PKER), 283 to 322 (NFEK…ILYK), and 325 to 357 (GHAG…GEIQ). Lysine 270 participates in a covalent cross-link: Glycyl lysine isopeptide (Lys-Gly) (interchain with G-Cter in SUMO2).

As to quaternary structure, component of the pre-catalytic and catalytic spliceosome complexes. Component of the postcatalytic spliceosome P complex. Part of the U5 snRNP complex. Interacts with PRPF8. Component of the U4/U6-U5 tri-snRNP complex composed of the U4, U6 and U5 snRNAs and at least PRPF3, PRPF4, PRPF6, PRPF8, PRPF31, SNRNP200, TXNL4A, WDR57, SNRNP40, DDX23, CD2BP2, PPIH, SNU13, EFTUD2, SART1 and USP39. Component of the minor spliceosome, which splices U12-type introns.

It localises to the nucleus. Its function is as follows. Required for pre-mRNA splicing as component of the activated spliceosome. Component of the U5 small nuclear ribonucleoprotein (snRNP) complex and the U4/U6-U5 tri-snRNP complex, building blocks of the spliceosome. As a component of the minor spliceosome, involved in the splicing of U12-type introns in pre-mRNAs. The chain is U5 small nuclear ribonucleoprotein 40 kDa protein (SNRNP40) from Homo sapiens (Human).